We begin with the raw amino-acid sequence, 605 residues long: Elongation factor 4 (605 aa).

Residues 11 to 193 (KRIRNFSIIA…QIVTRISPPQ (183 aa)) enclose the tr-type G domain. Residues 23–28 (DHGKST) and 140–143 (NKVD) contribute to the GTP site.

Belongs to the TRAFAC class translation factor GTPase superfamily. Classic translation factor GTPase family. LepA subfamily.

Its subcellular location is the cell membrane. The enzyme catalyses GTP + H2O = GDP + phosphate + H(+). Functionally, required for accurate and efficient protein synthesis under certain stress conditions. May act as a fidelity factor of the translation reaction, by catalyzing a one-codon backward translocation of tRNAs on improperly translocated ribosomes. Back-translocation proceeds from a post-translocation (POST) complex to a pre-translocation (PRE) complex, thus giving elongation factor G a second chance to translocate the tRNAs correctly. Binds to ribosomes in a GTP-dependent manner. The polypeptide is Elongation factor 4 (Onion yellows phytoplasma (strain OY-M)).